The following is an 86-amino-acid chain: Exodeoxyribonuclease 7 small subunit (86 aa).

Belongs to the XseB family. In terms of assembly, heterooligomer composed of large and small subunits.

It is found in the cytoplasm. The catalysed reaction is Exonucleolytic cleavage in either 5'- to 3'- or 3'- to 5'-direction to yield nucleoside 5'-phosphates.. Functionally, bidirectionally degrades single-stranded DNA into large acid-insoluble oligonucleotides, which are then degraded further into small acid-soluble oligonucleotides. The sequence is that of Exodeoxyribonuclease 7 small subunit from Bacillus licheniformis (strain ATCC 14580 / DSM 13 / JCM 2505 / CCUG 7422 / NBRC 12200 / NCIMB 9375 / NCTC 10341 / NRRL NRS-1264 / Gibson 46).